Consider the following 592-residue polypeptide: Putative nucleoside-triphosphatase (592 aa).

Catalysis depends on glutamate 200, which acts as the Proton acceptor.

This sequence belongs to the GDA1/CD39 NTPase family.

The enzyme catalyses a ribonucleoside 5'-triphosphate + H2O = a ribonucleoside 5'-diphosphate + phosphate + H(+). This is Putative nucleoside-triphosphatase (NTP4) from Toxoplasma gondii.